Reading from the N-terminus, the 374-residue chain is Inner membrane transport permease YhhJ (374 aa).

Residues 1–22 are Cytoplasmic-facing; the sequence is MRHLRNIFNLGIKELRSLLGDK. A helical transmembrane segment spans residues 23–43; it reads AMLTLIVFSFTVSVYSSATVT. The Periplasmic portion of the chain corresponds to 44–172; sequence PGSLNLAPIA…TRMRFNPNLD (129 aa). In terms of domain architecture, ABC transmembrane type-2 spans 133 to 369; the sequence is NGYIQNIING…TIALLRFRKT (237 aa). The chain crosses the membrane as a helical span at residues 173-193; sequence PAWFGGVMAIINNITMLAIVL. Over 194 to 229 the chain is Cytoplasmic; it reads TGSALIREREHGTVEHLLVMPITPFEIMMAKIWSMG. The helical transmembrane segment at 230–250 threads the bilayer; it reads LVVLVVSGLSLVLMVKGVLGV. Residues 251-255 lie on the Periplasmic side of the membrane; the sequence is PIEGS. A helical membrane pass occupies residues 256 to 276; sequence IPLFMLGVALSLFATTSIGIF. Residues 277–283 are Cytoplasmic-facing; it reads MGTIARS. A helical transmembrane segment spans residues 284 to 304; it reads MPQLGLLVILVLLPLQMLSGG. Topologically, residues 305–342 are periplasmic; sequence STPRESMPQMVQDIMLTMPTTHFVSLAQAILYRGAGFE. Residues 343–363 traverse the membrane as a helical segment; that stretch reads IVWPQFLTLMAIGGAFFTIAL. The Cytoplasmic portion of the chain corresponds to 364-374; that stretch reads LRFRKTIGTMA.

The protein belongs to the ABC-2 integral membrane protein family.

The protein localises to the cell inner membrane. The protein is Inner membrane transport permease YhhJ (yhhJ) of Escherichia coli (strain K12).